A 127-amino-acid chain; its full sequence is C-C motif chemokine 28 (127 aa).

An N-terminal signal peptide occupies residues 1-19; the sequence is MQQRGLAIVALAVCAALHA. Cystine bridges form between cysteine 30–cysteine 58 and cysteine 31–cysteine 73. The N-linked (GlcNAc...) asparagine glycan is linked to asparagine 78. Residues 92–115 are compositionally biased toward basic residues; that stretch reads KNGKGNVCHRKKHHGKRNSNRAHQ. The tract at residues 92-127 is disordered; the sequence is KNGKGNVCHRKKHHGKRNSNRAHQGKHETYGHKTPY. Residues 116–127 show a composition bias toward basic and acidic residues; the sequence is GKHETYGHKTPY.

Belongs to the intercrine beta (chemokine CC) family. As to expression, preferentially expressed by epithelial cells of diverse tissues including normal and pathological colon, salivary gland, mammary gland, trachea and rectum. Also found in prostate, spleen, thyroid, psoriasis skin and in lower levels in peripheral blood leukocytes, small intestine, Peyer patches, stomach and normal skin.

The protein localises to the secreted. Chemotactic activity for resting CD4, CD8 T-cells and eosinophils. Binds to CCR3 and CCR10 and induces calcium mobilization in a dose-dependent manner. In Homo sapiens (Human), this protein is C-C motif chemokine 28 (CCL28).